A 366-amino-acid chain; its full sequence is Putative zinc metalloprotease slr1821 (366 aa).

Position 20 (H20) interacts with Zn(2+). E21 is an active-site residue. A Zn(2+)-binding site is contributed by H24. Helical transmembrane passes span 95–115 (AIVISAGVIANLVFAYFLLIG), 293–313 (AVINILPLPALDGGQLVFLLI), and 325–345 (FQMGVMQTGLVLLLSLGVFLI). One can recognise a PDZ domain in the interval 106–188 (LVFAYFLLIG…VPITVEVQRG (83 aa)).

The protein belongs to the peptidase M50B family. Zn(2+) is required as a cofactor.

The protein resides in the cell inner membrane. In Synechocystis sp. (strain ATCC 27184 / PCC 6803 / Kazusa), this protein is Putative zinc metalloprotease slr1821.